The primary structure comprises 388 residues: Oligogalacturonide lyase (388 aa).

It localises to the periplasm. It catalyses the reaction 4-(4-deoxy-alpha-D-galact-4-enuronosyl)-D-galacturonate = 2 5-dehydro-4-deoxy-D-glucuronate. The protein operates within glycan metabolism; pectin degradation; 2-dehydro-3-deoxy-D-gluconate from pectin: step 3/5. Involved in degradation of pectin, which causes soft-rod disease in plants. The protein is Oligogalacturonide lyase (ogl) of Pectobacterium atrosepticum (strain SCRI 1043 / ATCC BAA-672) (Erwinia carotovora subsp. atroseptica).